A 100-amino-acid polypeptide reads, in one-letter code: MTERFTGRLADVIRRPLITEKATRALELNQYTFEVDHRAAKPDIKAAVEQLFDVKVTGISTMNPPRRSRRVGRFAGKRAQVKKAVVRLAEGSSIQLFPES.

It belongs to the universal ribosomal protein uL23 family. Part of the 50S ribosomal subunit. Contacts protein L29, and trigger factor when it is bound to the ribosome.

Its function is as follows. One of the early assembly proteins it binds 23S rRNA. One of the proteins that surrounds the polypeptide exit tunnel on the outside of the ribosome. Forms the main docking site for trigger factor binding to the ribosome. The chain is Large ribosomal subunit protein uL23 from Synechococcus sp. (strain WH7803).